A 165-amino-acid chain; its full sequence is uncharacterized protein (165 aa).

The disordered stretch occupies residues 28 to 97 (EASAPSGNPP…QLSQSLEVPT (70 aa)). The span at 34–47 (GNPPPPPPPPPPPI) shows a compositional bias: pro residues. Composition is skewed to polar residues over residues 54-66 (KSLN…QLDN) and 73-94 (AQHT…QSLE).

This is an uncharacterized protein from Rickettsia prowazekii (strain Madrid E).